A 173-amino-acid chain; its full sequence is UPF0598 protein F59C6.12 (173 aa).

This sequence belongs to the UPF0598 family.

The polypeptide is UPF0598 protein F59C6.12 (Caenorhabditis elegans).